Here is a 154-residue protein sequence, read N- to C-terminus: Large ribosomal subunit protein bL17 (154 aa).

The disordered stretch occupies residues 125 to 154; sequence AASQKSSKQDRAKRVQGSKKNVDAVAESAE.

The protein belongs to the bacterial ribosomal protein bL17 family. Part of the 50S ribosomal subunit. Contacts protein L32.

This Chlorobium chlorochromatii (strain CaD3) protein is Large ribosomal subunit protein bL17.